The sequence spans 97 residues: Putative membrane protein insertion efficiency factor (97 aa).

The interval 72–97 (VPGAEPDQEQHQCTPLCNHHSEDHSQ) is disordered.

This sequence belongs to the UPF0161 family.

The protein resides in the cell inner membrane. Could be involved in insertion of integral membrane proteins into the membrane. The polypeptide is Putative membrane protein insertion efficiency factor (Alcanivorax borkumensis (strain ATCC 700651 / DSM 11573 / NCIMB 13689 / SK2)).